Consider the following 734-residue polypeptide: Photosystem I P700 chlorophyll a apoprotein A2 (734 aa).

The next 8 membrane-spanning stretches (helical) occupy residues 46–69, 135–158, 175–199, 273–291, 330–353, 369–395, 417–439, and 517–535; these read IFASHFGQLAIIFLWTSGNLFHVA, LYTGALFLLFLSAISLIAGRFHLQ, LDHHLSGLFGVSSLAWTGHLVHVAI, IAHHHLAIAFVFFIAGHMY, LHFQLGLALASLGVITSLVAQHMY, AALYTHHQYIAGFIMTGAFAHGAIFFI, AIISHLSWASLFLGFHTLGLYVH, and FLVHHAIALGLHTTTLILV. [4Fe-4S] cluster is bound by residues Cys-559 and Cys-568. 2 helical membrane passes run 575–596 and 643–665; these read AFYLAVFWMLNTIGWVTFYWHW and LSVWAWMFLFGHLVWATGFMFLI. His-654, Met-662, and Tyr-670 together coordinate chlorophyll a. Trp-671 contacts phylloquinone. A helical membrane pass occupies residues 707-727; the sequence is LVGLAHFSVGYIFTYAAFLIA.

It belongs to the PsaA/PsaB family. In terms of assembly, the PsaA/B heterodimer binds the P700 chlorophyll special pair and subsequent electron acceptors. PSI consists of a core antenna complex that captures photons, and an electron transfer chain that converts photonic excitation into a charge separation. The eukaryotic PSI reaction center is composed of at least 11 subunits. P700 is a chlorophyll a/chlorophyll a' dimer, A0 is one or more chlorophyll a, A1 is one or both phylloquinones and FX is a shared 4Fe-4S iron-sulfur center. serves as cofactor.

Its subcellular location is the plastid. It localises to the chloroplast thylakoid membrane. It carries out the reaction reduced [plastocyanin] + hnu + oxidized [2Fe-2S]-[ferredoxin] = oxidized [plastocyanin] + reduced [2Fe-2S]-[ferredoxin]. Functionally, psaA and PsaB bind P700, the primary electron donor of photosystem I (PSI), as well as the electron acceptors A0, A1 and FX. PSI is a plastocyanin-ferredoxin oxidoreductase, converting photonic excitation into a charge separation, which transfers an electron from the donor P700 chlorophyll pair to the spectroscopically characterized acceptors A0, A1, FX, FA and FB in turn. Oxidized P700 is reduced on the lumenal side of the thylakoid membrane by plastocyanin. This chain is Photosystem I P700 chlorophyll a apoprotein A2, found in Cycas taitungensis (Prince sago).